Here is a 536-residue protein sequence, read N- to C-terminus: MATRRQPLIPGWLIPGVSATTLVVAVALAAFLALWWNAPQDDWVAVWQDSYLWHVVRFSFWQAFLSALLSVIPAIFLARALYRRRFPGRLALLRLCAMTLILPVLVAVFGILSVYGRQGWLATLCQSLGLEWTFSPYGLQGILLAHVFFNLPMASRLLLQALENIPGEQRQLAAQLGMRSWHFFRFVEWPWLRRQIPPVAALIFMLCFASFATVLSLGGGPQATTIELAIYQALSYDYDPARAAMLALLQMVCCLGLVLLSQRLSKAIAPGTTLLQGWRDPDDRLHSRICDTVLIVLALLLLLPPLLAVIVDGVNRQLPEVLAQPVLWQALWTSLRIALAAGVLCVVLTMMLLWSSRELRARQKMLAGQVLEMSGMLILAMPGIVLATGFFLLLNNTIGLPQSADGIVIFTNALMAIPYALKVLENPMRDITARYSMLCQSLGIEGWSRLKVVELRALKRPLAQALAFACVLSIGDFGVVALFGNDDFRTLPFYLYQQIGSYRSQDGAVTALILLLLCFLLFTVIEKLPGRNVKTD.

12 consecutive transmembrane segments (helical) span residues 12–32 (WLIP…AAFL), 58–78 (FSFW…IFLA), 95–115 (LCAM…LSVY), 134–154 (FSPY…LPMA), 199–219 (VAAL…SLGG), 240–260 (PARA…LVLL), 293–313 (VLIV…IVDG), 334–354 (SLRI…MLLW), 374–394 (SGML…FLLL), 404–424 (ADGI…LKVL), 463–483 (AQAL…VALF), and 506–526 (DGAV…TVIE). Residues 56-261 (VRFSFWQAFL…VCCLGLVLLS (206 aa)) form the ABC transmembrane type-1 1 domain. The ABC transmembrane type-1 2 domain maps to 331 to 525 (LWTSLRIALA…LLCFLLFTVI (195 aa)).

Belongs to the binding-protein-dependent transport system permease family. CysTW subfamily. In terms of assembly, the complex is composed of two ATP-binding proteins (ThiQ), two transmembrane proteins (ThiP) and a solute-binding protein (ThiB).

It is found in the cell inner membrane. Its activity is regulated as follows. Transport is inhibited by the sulfhydryl-specific modifier N-ethylmaleimide. Functionally, part of the ABC transporter complex ThiBPQ involved in thiamine import. Probably responsible for the translocation of the substrate across the membrane. The chain is Thiamine transport system permease protein ThiP (thiP) from Escherichia coli (strain K12).